Reading from the N-terminus, the 131-residue chain is L-ectoine synthase (131 aa).

Belongs to the ectoine synthase family.

The enzyme catalyses (2S)-4-acetamido-2-aminobutanoate = L-ectoine + H2O. Its pathway is amine and polyamine biosynthesis; ectoine biosynthesis; L-ectoine from L-aspartate 4-semialdehyde: step 3/3. Its function is as follows. Catalyzes the circularization of gamma-N-acetyl-alpha,gamma-diaminobutyric acid (ADABA) to ectoine (1,4,5,6-tetrahydro-2-methyl-4-pyrimidine carboxylic acid), which is an excellent osmoprotectant. The protein is L-ectoine synthase of Bordetella bronchiseptica (strain ATCC BAA-588 / NCTC 13252 / RB50) (Alcaligenes bronchisepticus).